The following is a 54-amino-acid chain: 2-aminomuconate deaminase (54 aa).

As to quaternary structure, homohexamer.

The catalysed reaction is (2Z,4E)-2-aminomuconate + H2O = (3E)-2-oxohex-3-enedioate + NH4(+). It participates in xenobiotic degradation; nitrobenzene degradation. Functionally, converts 2-aminomuconate to 4-oxalocrotonate, an intermediate step in the biodegradation of nitrobenzene. The polypeptide is 2-aminomuconate deaminase (Ectopseudomonas oleovorans (Pseudomonas oleovorans)).